Consider the following 179-residue polypeptide: tRNA (cytidine(56)-2'-O)-methyltransferase (179 aa).

S-adenosyl-L-methionine is bound by residues L82, 112-116 (GAEKV), and 130-137 (VGNQPHSE).

It belongs to the aTrm56 family. Homodimer.

The protein localises to the cytoplasm. It carries out the reaction cytidine(56) in tRNA + S-adenosyl-L-methionine = 2'-O-methylcytidine(56) in tRNA + S-adenosyl-L-homocysteine + H(+). Specifically catalyzes the AdoMet-dependent 2'-O-ribose methylation of cytidine at position 56 in tRNAs. In Methanococcus maripaludis (strain DSM 14266 / JCM 13030 / NBRC 101832 / S2 / LL), this protein is tRNA (cytidine(56)-2'-O)-methyltransferase.